Reading from the N-terminus, the 575-residue chain is Epsin-1 (575 aa).

6 residues coordinate a 1,2-diacyl-sn-glycero-3-phospho-(1D-myo-inositol-4,5-bisphosphate): arginine 8, lysine 11, arginine 25, asparagine 30, arginine 63, and histidine 73. Residues 12-144 enclose the ENTH domain; the sequence is NIVHNYSEAE…RDEDRLREER (133 aa). The disordered stretch occupies residues 149–186; it reads KTKEKLAQTATASSAAVGSGPPPEAEQAWPQSSGEEEL. Low complexity predominate over residues 157 to 167; sequence TATASSAAVGS. UIM domains lie at 183-202, 208-227, and 233-252; these read EEEL…ADQP, EDDV…HDKE, and GDDL…TGGK. Disordered regions lie at residues 264–283 and 293–575; these read FTTP…ASVP and SDPW…PFLL. 8 tandem repeats follow at residues 274-276, 294-296, 306-308, 319-321, 332-334, 349-351, 367-369, and 377-379. The tract at residues 274 to 379 is 8 X 3 AA repeats of D-P-W; it reads DPWGGPASVP…APAPAFSDPW (106 aa). Residues 306–316 show a composition bias toward low complexity; it reads DPWGGAAPTPA. Positions 333–346 are enriched in low complexity; the sequence is PWGGTPAPAAGEGP. The segment covering 367–379 has biased composition (low complexity); it reads DPWAPAPAFSDPW. Serine 382 carries the phosphoserine modification. The short motif at 401–410 is the [DE]-X(1,2)-F-X-X-[FL]-X-X-X-R motif element; it reads DEFSDFDRLR. Phosphoserine occurs at positions 418 and 419. At threonine 420 the chain carries Phosphothreonine. 3 positions are modified to phosphoserine: serine 434, serine 446, and serine 453. Pro residues predominate over residues 453–467; it reads SPPPAATPTPTPPTR. Residues threonine 459, threonine 463, and threonine 469 each carry the phosphothreonine modification. Serine 472 is subject to Phosphoserine. Phosphothreonine is present on threonine 493. 2 consecutive repeat copies span residues 501 to 503 and 517 to 519. The segment at 501 to 573 is 3 X 3 AA repeats of N-P-F; the sequence is NPFLPSGAPA…GPPAPNTNPF (73 aa). Arginine 533 bears the Omega-N-methylarginine mark. Positions 556–569 are enriched in pro residues; that stretch reads GLPPMMPPGPPAPN. The stretch at 571–573 is repeat 3; the sequence is NPF.

Belongs to the epsin family. In terms of assembly, monomer. Binds ITSN1. Binds clathrin, ZBTB16/ZNF145, AP2A1 and AP2A2. Binds ubiquitinated proteins. Interacts with RALBP1 in a complex also containing NUMB and TFAP2A during interphase and mitosis. Interacts with AP2B1. Interacts with UBQLN2. Interacts with REPS2; the interaction is direct. Interacts with EPS15; the interaction is direct. Interacts with ENTREP1. Ubiquitinated. In terms of processing, phosphorylated on serine and/or threonine residues in mitotic cells. Phosphorylation reduces interaction with REPS2, AP-2 and the membrane fraction. Depolarization of synaptosomes results in dephosphorylation. Ubiquitously expressed. Detected in liver, spleen and testis, and weakly in lung and thymus (at protein level).

The protein localises to the cytoplasm. It is found in the cell membrane. The protein resides in the nucleus. Its subcellular location is the membrane. It localises to the clathrin-coated pit. Functionally, binds to membranes enriched in phosphatidylinositol 4,5-bisphosphate (PtdIns(4,5)P2). Modifies membrane curvature and facilitates the formation of clathrin-coated invaginations. Regulates receptor-mediated endocytosis. The polypeptide is Epsin-1 (Epn1) (Rattus norvegicus (Rat)).